The sequence spans 478 residues: Cytochrome c-552 (478 aa).

The N-terminal stretch at 1-26 (MARKTLRARRFFSLIFPFFFITSVYA) is a signal peptide. H94 serves as a coordination point for heme c. Residues C122, C125, and K126 each coordinate heme. Positions 160, 163, 164, 209, 212, and 213 each coordinate heme c. The Ca(2+) site is built by E215, Y216, K261, and Q263. Residue Y216 participates in substrate binding. Substrate is bound at residue H264. Residues H275, C282, C285, H286, H301, C314, C317, H318, and H393 each coordinate heme c.

Belongs to the cytochrome c-552 family. Requires Ca(2+) as cofactor. Heme c serves as cofactor.

It localises to the periplasm. The enzyme catalyses 6 Fe(III)-[cytochrome c] + NH4(+) + 2 H2O = 6 Fe(II)-[cytochrome c] + nitrite + 8 H(+). Its pathway is nitrogen metabolism; nitrate reduction (assimilation). Its function is as follows. Catalyzes the reduction of nitrite to ammonia, consuming six electrons in the process. The chain is Cytochrome c-552 from Salmonella gallinarum (strain 287/91 / NCTC 13346).